The sequence spans 353 residues: MSGNTFGRIFRLTTYGESHGPGLGGVVDGCPAGVPLDESVIQRELDLRRPGSASAGLAGTARKEPDTVRLLSGVFEGVTTGTPIGFHIANEDQRSRDYGDLAKLYRPGHADITYDAKYGLRDFRGGGRASGRETVSRVAGGAVALALLAMHDIEVRAYTVEIGGVPADVVDPAGAQGRLFFSPDPDVVPAWESLVHDVRAEGDTLGGIVQVEATGVPAGLGEPVFDKLDALLAHAMMSVGAVKAVEVGAGLEAARLRGSENNDPIIPGGFHTNHAGGILGGISNGQPIVVRATVKPIPSIAQEQITIDTNGRPAPLRVGGRHDICAIPRVVPVLKAMAALVLADSLLLQRRMG.

R48 is a binding site for NADP(+). FMN is bound by residues 128-130 (RAS), G280, 295-299 (KPIPS), and R321.

Belongs to the chorismate synthase family. Homotetramer. It depends on FMNH2 as a cofactor.

It catalyses the reaction 5-O-(1-carboxyvinyl)-3-phosphoshikimate = chorismate + phosphate. It functions in the pathway metabolic intermediate biosynthesis; chorismate biosynthesis; chorismate from D-erythrose 4-phosphate and phosphoenolpyruvate: step 7/7. Its function is as follows. Catalyzes the anti-1,4-elimination of the C-3 phosphate and the C-6 proR hydrogen from 5-enolpyruvylshikimate-3-phosphate (EPSP) to yield chorismate, which is the branch point compound that serves as the starting substrate for the three terminal pathways of aromatic amino acid biosynthesis. This reaction introduces a second double bond into the aromatic ring system. This chain is Chorismate synthase, found in Nitratidesulfovibrio vulgaris (strain DSM 19637 / Miyazaki F) (Desulfovibrio vulgaris).